The chain runs to 345 residues: tRNA N6-adenosine threonylcarbamoyltransferase (345 aa).

Fe cation is bound by residues H109 and H113. Substrate is bound by residues 136–140, D169, G182, D186, and N284; that span reads TVSGG. D312 is a binding site for Fe cation.

It belongs to the KAE1 / TsaD family. Requires Fe(2+) as cofactor.

The protein resides in the cytoplasm. The enzyme catalyses L-threonylcarbamoyladenylate + adenosine(37) in tRNA = N(6)-L-threonylcarbamoyladenosine(37) in tRNA + AMP + H(+). In terms of biological role, required for the formation of a threonylcarbamoyl group on adenosine at position 37 (t(6)A37) in tRNAs that read codons beginning with adenine. Is involved in the transfer of the threonylcarbamoyl moiety of threonylcarbamoyl-AMP (TC-AMP) to the N6 group of A37, together with TsaE and TsaB. TsaD likely plays a direct catalytic role in this reaction. The polypeptide is tRNA N6-adenosine threonylcarbamoyltransferase (Prosthecochloris aestuarii (strain DSM 271 / SK 413)).